Consider the following 522-residue polypeptide: BTB/POZ domain-containing protein 3 (522 aa).

Residues 120–190 (ADVHFVVGPP…IYCDEIDLAA (71 aa)) enclose the BTB domain. Residues 235-300 (FEEPDLTQRC…NWAEVECQRQ (66 aa)) form the BACK domain.

Strongly expressed in the primary visual cortex.

It is found in the cytoplasm. The protein localises to the cytosol. Its subcellular location is the nucleus. In terms of biological role, acts as a key regulator of dendritic field orientation during development of sensory cortex. Also directs dendrites toward active axon terminals when ectopically expressed. The sequence is that of BTB/POZ domain-containing protein 3 (BTBD3) from Callithrix jacchus (White-tufted-ear marmoset).